The primary structure comprises 200 residues: 7-methyl-GTP pyrophosphatase (200 aa).

Asp-75 acts as the Proton acceptor in catalysis.

It belongs to the Maf family. YceF subfamily. A divalent metal cation serves as cofactor.

It localises to the cytoplasm. It carries out the reaction N(7)-methyl-GTP + H2O = N(7)-methyl-GMP + diphosphate + H(+). Nucleoside triphosphate pyrophosphatase that hydrolyzes 7-methyl-GTP (m(7)GTP). May have a dual role in cell division arrest and in preventing the incorporation of modified nucleotides into cellular nucleic acids. This Hydrogenovibrio crunogenus (strain DSM 25203 / XCL-2) (Thiomicrospira crunogena) protein is 7-methyl-GTP pyrophosphatase.